An 859-amino-acid chain; its full sequence is MSVVGLDVGSQSCYIAVARAGGIETIANEFSDRCTPSVISFGSKNRTIGVAAKSQQITHANNTVSNFKRFHGRAFNDPFIQKEKENLSYDLVPMKNGGVGIKVMYMDEEHLFSVEQITAMLLTKLKETAENNLKKPVTDCVISVPSFFTDAERRSVLDAAQIVGLNCLRLMNDMTAVALNYGIYKQDLPSLDEKPRIVVFVDMGHSAFQVSACAFNKGKLKVLGTAFDPFLGGKNFDAKLVEYFCAEFKTKYKLDAKSKIRALLRLYQECEKLKKLMSSNSTDLPLNIECFMNDKDVSGKMNRAQFEELCADLLQKIEVPLYLLMEQTQLKVEDVSAVEIVGGTTRIPAVKEKIAKFFGKDVSTTLNADEAVARGCALQCAILSPAFKVREFSVTDAVPFPISLVWSHDSEDAEGVHEVFSRNHAAPFSKVLTFLRSGPFELEAFYSDPQGVPYPEAKIGRFIVQNVSAQKDGEKSRVKVKVRVNTHGIFTISTASMVEKIPAEENEVSSLEADMDCQNQRPPENPDAEKNIQQDNNEAGTQPQVQTDGHQTSQSPPSPELTSEENKIPDADKANEKKVDQPPEAKKPKIKVVNVELPIEANLVWQLGKDLLNMYIETEGKMIMQDKLEKERNDAKNAVEEYVYEFRDKLCGPYEKFICEQDHQKFLRLLTETENWLYEEGEDQAKQAYVDKLEELMKIGTPIKVRFQEAEERPKIFEELGQRLQHYAKIAADFRNNDEKYNHIDESEMKKVEKSVNEMMEWMNNVMSAQAKKSLDQDPVVCAQEIRAKIKELNNNCEPVVTQPKPKIESPKLERTPNGPSTDKKEEDLDGKNNFSAEPPHQNGECYPNEKSSINMDLD.

Ser-2 carries the N-acetylserine modification. Position 471 is an N6-acetyllysine (Lys-471). Ser-509 and Ser-510 each carry phosphoserine. 2 disordered regions span residues 515-585 and 797-859; these read MDCQ…PPEA and CEPV…MDLD. Over residues 533–555 the composition is skewed to polar residues; sequence QQDNNEAGTQPQVQTDGHQTSQS. Ser-558 bears the Phosphoserine mark. At Thr-562 the chain carries Phosphothreonine. Composition is skewed to basic and acidic residues over residues 564–585 and 806–815; these read EENK…PPEA and PKIESPKLER. Phosphoserine is present on Ser-810. Thr-816 carries the post-translational modification Phosphothreonine. Over residues 822 to 831 the composition is skewed to basic and acidic residues; that stretch reads TDKKEEDLDG. The span at 850 to 859 shows a compositional bias: polar residues; the sequence is EKSSINMDLD.

Belongs to the heat shock protein 70 family. In terms of assembly, interacts with HSPA8/HSC70. Interacts with HSPA1A (via NBD) and HSPA1B (via NBD). Post-translationally, phosphorylation on Ser-509 may be important for regulation of the HSPA8/HSC70 chaperone activity.

The protein localises to the cytoplasm. Its function is as follows. Acts as a nucleotide-exchange factor (NEF) for chaperone proteins HSPA1A and HSPA1B, promoting the release of ADP from HSPA1A/B thereby triggering substrate release. Prevents the aggregation of denatured proteins in cells under severe stress, on which the ATP levels decrease markedly. Inhibits HSPA8/HSC70 ATPase and chaperone activities. This Bos taurus (Bovine) protein is Heat shock protein 105 kDa (HSPH1).